We begin with the raw amino-acid sequence, 323 residues long: Homoserine kinase (323 aa).

Residue 97–107 (PHGRGMGSSGA) participates in ATP binding.

It belongs to the GHMP kinase family. Homoserine kinase subfamily.

The protein localises to the cytoplasm. The enzyme catalyses L-homoserine + ATP = O-phospho-L-homoserine + ADP + H(+). The protein operates within amino-acid biosynthesis; L-threonine biosynthesis; L-threonine from L-aspartate: step 4/5. Catalyzes the ATP-dependent phosphorylation of L-homoserine to L-homoserine phosphate. In Leifsonia xyli subsp. xyli (strain CTCB07), this protein is Homoserine kinase.